The sequence spans 324 residues: Transmembrane protein 171 (324 aa).

The next 4 helical transmembrane spans lie at 22-42 (IFCFFVFGAVLLCVGVLLSIF), 57-77 (MVLKVAGPACAVVGLGAVILA), 113-133 (LIFGFLFLTSGMLISVLGIWV), and 160-180 (FLSLQIMGPLIVLVGLCFFVV). The span at 229–239 (PESSASAVAES) shows a compositional bias: low complexity. Disordered stretches follow at residues 229–248 (PESSASAVAESPGTNSLLPN) and 279–304 (YTISGTNSSSEASHTPHLPSELPPRY). Polar residues predominate over residues 279-291 (YTISGTNSSSEAS).

The protein localises to the membrane. The polypeptide is Transmembrane protein 171 (TMEM171) (Homo sapiens (Human)).